Consider the following 833-residue polypeptide: Translation initiation factor IF-2 (833 aa).

A tr-type G domain is found at 331-501 (TRAPVVTVMG…LLIAEMQDLK (171 aa)). Positions 340 to 347 (GHVDHGKT) are G1. A GTP-binding site is contributed by 340–347 (GHVDHGKT). Residues 365-369 (GITQH) form a G2 region. Residues 387–390 (DTPG) form a G3 region. Residues 387–391 (DTPGH) and 441–444 (NKID) each bind GTP. Positions 441 to 444 (NKID) are G4. Residues 477–479 (SAL) form a G5 region.

Belongs to the TRAFAC class translation factor GTPase superfamily. Classic translation factor GTPase family. IF-2 subfamily.

It localises to the cytoplasm. One of the essential components for the initiation of protein synthesis. Protects formylmethionyl-tRNA from spontaneous hydrolysis and promotes its binding to the 30S ribosomal subunits. Also involved in the hydrolysis of GTP during the formation of the 70S ribosomal complex. This is Translation initiation factor IF-2 from Rickettsia canadensis (strain McKiel).